A 50-amino-acid polypeptide reads, in one-letter code: Disintegrin pyramidin-A (50 aa).

Residues aspartate 1–glutamate 47 form the Disintegrin domain. 4 cysteine pairs are disulfide-bonded: cysteine 2-cysteine 11, cysteine 7-cysteine 32, cysteine 8-cysteine 37, and cysteine 20-cysteine 39. A Cell attachment site motif is present at residues arginine 24 to aspartate 26.

The protein belongs to the venom metalloproteinase (M12B) family. P-II subfamily. P-IIa sub-subfamily. In terms of assembly, monomer (disintegrin). Expressed by the venom gland.

It is found in the secreted. Functionally, inhibits ADP-induced human platelet aggregation. The polypeptide is Disintegrin pyramidin-A (Echis pyramidum leakeyi (Leakey's carpet viper)).